Consider the following 357-residue polypeptide: 3-isopropylmalate dehydrogenase (357 aa).

Position 76–89 (glycine 76–glutamate 89) interacts with NAD(+). Residues arginine 96, arginine 106, arginine 135, and aspartate 224 each contribute to the substrate site. Positions 224, 248, and 252 each coordinate Mg(2+). An NAD(+)-binding site is contributed by glycine 282–asparagine 294.

Belongs to the isocitrate and isopropylmalate dehydrogenases family. LeuB type 1 subfamily. As to quaternary structure, homodimer. Mg(2+) is required as a cofactor. The cofactor is Mn(2+).

It is found in the cytoplasm. The catalysed reaction is (2R,3S)-3-isopropylmalate + NAD(+) = 4-methyl-2-oxopentanoate + CO2 + NADH. It functions in the pathway amino-acid biosynthesis; L-leucine biosynthesis; L-leucine from 3-methyl-2-oxobutanoate: step 3/4. In terms of biological role, catalyzes the oxidation of 3-carboxy-2-hydroxy-4-methylpentanoate (3-isopropylmalate) to 3-carboxy-4-methyl-2-oxopentanoate. The product decarboxylates to 4-methyl-2 oxopentanoate. The sequence is that of 3-isopropylmalate dehydrogenase from Nitratidesulfovibrio vulgaris (strain ATCC 29579 / DSM 644 / CCUG 34227 / NCIMB 8303 / VKM B-1760 / Hildenborough) (Desulfovibrio vulgaris).